Here is a 378-residue protein sequence, read N- to C-terminus: Biotin synthase, mitochondrial (378 aa).

A mitochondrion-targeting transit peptide spans 1–26 (MMLVRSVFRSQLRPSVSGGLQSASCY). The region spanning 79–308 (REVQQCTLLS…KAMVRLSAGR (230 aa)) is the Radical SAM core domain. 3 residues coordinate [4Fe-4S] cluster: Cys94, Cys98, and Cys101. [2Fe-2S] cluster is bound by residues Cys138, Cys171, Cys231, and Arg303. The disordered stretch occupies residues 357-378 (PPSFSEDDSESENCEKVASASH).

It belongs to the radical SAM superfamily. Biotin synthase family. The cofactor is [4Fe-4S] cluster. [2Fe-2S] cluster serves as cofactor.

The protein localises to the mitochondrion. The enzyme catalyses (4R,5S)-dethiobiotin + (sulfur carrier)-SH + 2 reduced [2Fe-2S]-[ferredoxin] + 2 S-adenosyl-L-methionine = (sulfur carrier)-H + biotin + 2 5'-deoxyadenosine + 2 L-methionine + 2 oxidized [2Fe-2S]-[ferredoxin]. Its pathway is cofactor biosynthesis; biotin biosynthesis; biotin from 7,8-diaminononanoate: step 2/2. The protein is Biotin synthase, mitochondrial (BIO2) of Arabidopsis thaliana (Mouse-ear cress).